The chain runs to 239 residues: 3,4-dihydroxyphthalate decarboxylase (239 aa).

Glutamate 84 acts as the Proton donor/acceptor in catalysis. Residues glutamate 84, histidine 103, histidine 105, and histidine 171 each coordinate a divalent metal cation.

It belongs to the aldolase class II family. Requires a divalent metal cation as cofactor.

It carries out the reaction 3,4-dihydroxyphthalate + H(+) = 3,4-dihydroxybenzoate + CO2. It participates in xenobiotic degradation; phthalate degradation. In terms of biological role, catalyzes the decarboxylation of 3,4-dihydroxyphthalate to protocatechuate (3,4-dihydroxybenzoate) during phthalate metabolism. The protein is 3,4-dihydroxyphthalate decarboxylase of Terrabacter sp. (strain DBF63).